A 310-amino-acid polypeptide reads, in one-letter code: Alpha/beta hydrolase domain-containing protein 17C (310 aa).

Residues Ser192, Asp257, and His286 each act as charge relay system in the active site.

This sequence belongs to the AB hydrolase superfamily. ABHD17 family. Palmitoylated on cysteine residues located in a cysteine cluster at the N-terminus which promotes membrane localization.

The protein localises to the recycling endosome membrane. It is found in the cell projection. Its subcellular location is the dendritic spine. It localises to the postsynaptic density membrane. The enzyme catalyses S-hexadecanoyl-L-cysteinyl-[protein] + H2O = L-cysteinyl-[protein] + hexadecanoate + H(+). Functionally, hydrolyzes fatty acids from S-acylated cysteine residues in proteins. The sequence is that of Alpha/beta hydrolase domain-containing protein 17C from Xenopus tropicalis (Western clawed frog).